Here is a 115-residue protein sequence, read N- to C-terminus: U3-lycotoxin-Ls1a (115 aa).

The N-terminal stretch at 1–20 (MKFVLLFGVFLVTLFSYSSA) is a signal peptide. Positions 21–44 (EMLDDFGQADEDELLSLIEKEEAR) are excised as a propeptide. 4 disulfide bridges follow: Cys48–Cys63, Cys55–Cys72, Cys62–Cys87, and Cys74–Cys85.

This sequence belongs to the neurotoxin 19 (CSTX) family. 01 subfamily. In terms of tissue distribution, expressed by the venom gland.

It localises to the secreted. In Lycosa singoriensis (Wolf spider), this protein is U3-lycotoxin-Ls1a.